Consider the following 203-residue polypeptide: Small ribosomal subunit protein uS5 (203 aa).

Positions 1 to 25 (MPGRTRRDGGSESGGKDRRDRRDGG) are enriched in basic and acidic residues. Positions 1-36 (MPGRTRRDGGSESGGKDRRDRRDGGRGGAAQEKTPQ) are disordered. The S5 DRBM domain maps to 36–99 (QFERVVTINR…EEAKKNFFRV (64 aa)).

Belongs to the universal ribosomal protein uS5 family. In terms of assembly, part of the 30S ribosomal subunit. Contacts proteins S4 and S8.

Its function is as follows. With S4 and S12 plays an important role in translational accuracy. Functionally, located at the back of the 30S subunit body where it stabilizes the conformation of the head with respect to the body. The polypeptide is Small ribosomal subunit protein uS5 (Saccharopolyspora erythraea (strain ATCC 11635 / DSM 40517 / JCM 4748 / NBRC 13426 / NCIMB 8594 / NRRL 2338)).